The following is a 304-amino-acid chain: uncharacterized protein (304 aa).

This sequence belongs to the histone deacetylase family.

Its function is as follows. Putative deacetylase. This is an uncharacterized protein from Synechocystis sp. (strain ATCC 27184 / PCC 6803 / Kazusa).